The chain runs to 90 residues: uncharacterized protein (90 aa).

The interval 53–90 is disordered; the sequence is WRARPDANDADTTSSSSSSETCTESDDSSDVPPARYAV. The segment covering 63–74 has biased composition (low complexity); the sequence is DTTSSSSSSETC.

This is an uncharacterized protein from Orgyia pseudotsugata (Douglas-fir tussock moth).